The sequence spans 147 residues: Submaxillary gland androgen-regulated protein 3A (147 aa).

An N-terminal signal peptide occupies residues 1–22 (MKPLNLVLGLCILVGCFLSCEC). The segment at 27 to 128 (RRHDPRGPFP…ISITTPTARD (102 aa)) is disordered. Over residues 33 to 105 (GPFPPPPPPH…PTPSIPPTGP (73 aa)) the composition is skewed to pro residues. 3 tandem repeats follow at residues 43-54 (GPGIGRPHPPPF), 55-66 (GPGIGRPPPPPF), and 67-78 (GPGIGRPPPPPP). The interval 43 to 78 (GPGIGRPHPPPFGPGIGRPPPPPFGPGIGRPPPPPP) is 3 X 12 AA tandem repeats of G-P-G-I-G-R-P-[HP]-P-P-P-[PF]. Positions 108–127 (TVQATTMPAASISITTPTAR) are enriched in polar residues.

This sequence belongs to the PROL1/PROL3 family. As to expression, secreted into saliva by submaxillary gland.

It is found in the secreted. May play a role in protection or detoxification. The protein is Submaxillary gland androgen-regulated protein 3A (Smr3a) of Mus musculus (Mouse).